Here is a 4660-residue protein sequence, read N- to C-terminus: Low-density lipoprotein receptor-related protein 2 (4660 aa).

A signal peptide spans 1–25 (MERGAAAAAWMLLLAIAACLEPVSS). Residues 26-4425 (QECGSGNFRC…LSRGIPPGTT (4400 aa)) lie on the Extracellular side of the membrane. LDL-receptor class A domains follow at residues 27–63 (ECGS…IGCP), 66–104 (SCES…QNCA), 107–143 (TCSA…RNCH), 141–180 (NCHY…ANCT), 182–218 (LCSQ…RNCN), and 221–257 (TCGG…DGCE). 18 disulfides stabilise this stretch: cysteine 28–cysteine 40, cysteine 35–cysteine 53, cysteine 47–cysteine 62, cysteine 67–cysteine 80, cysteine 74–cysteine 93, cysteine 87–cysteine 103, cysteine 108–cysteine 120, cysteine 115–cysteine 133, cysteine 127–cysteine 142, cysteine 142–cysteine 157, cysteine 152–cysteine 170, cysteine 164–cysteine 179, cysteine 183–cysteine 195, cysteine 190–cysteine 208, cysteine 202–cysteine 217, cysteine 222–cysteine 234, cysteine 229–cysteine 247, and cysteine 241–cysteine 256. N-linked (GlcNAc...) asparagine glycosylation is found at asparagine 159 and asparagine 178. Asparagine 259 is a glycosylation site (N-linked (GlcNAc...) asparagine). Positions 264 to 307 (RCYPREWACPGSGRCISIDKVCDGVPDCPEGDDENNVTSGRTCG) constitute an LDL-receptor class A 7 domain. Disulfide bonds link cysteine 265–cysteine 278, cysteine 272–cysteine 291, and cysteine 285–cysteine 306. N-linked (GlcNAc...) asparagine glycosylation is found at asparagine 299 and asparagine 340. Residues 347–382 (DFDDCQIWGICDQKCENRQGRHQCLCEEGYILERGQ) form the EGF-like 1; calcium-binding domain. 2 disulfide bridges follow: cysteine 351–cysteine 361 and cysteine 357–cysteine 370. 4 LDL-receptor class B repeats span residues 435-477 (HRVF…DWIN), 478-520 (NKLY…DPTV), 521-567 (GYLF…DLVS), and 568-612 (KRVY…FEEH). The N-linked (GlcNAc...) asparagine glycan is linked to asparagine 462. N-linked (GlcNAc...) asparagine glycosylation is present at asparagine 657. LDL-receptor class B repeat units lie at residues 752–794 (STVF…DWIS), 795–836 (RNLY…HPTA), 837–880 (GYMF…DWSA), and 881–924 (SRLY…FKDN). Asparagine 865 carries an N-linked (GlcNAc...) asparagine glycan. Positions 1024 to 1060 (QCGSLSFPCNNGKCVPSFFRCDGVDDCHDNSDEHQCG) constitute an LDL-receptor class A 8 domain. Cystine bridges form between cysteine 1025-cysteine 1037, cysteine 1032-cysteine 1050, and cysteine 1044-cysteine 1059. N-linked (GlcNAc...) asparagine glycosylation occurs at asparagine 1063. LDL-receptor class A domains lie at 1065–1102 (TCSP…QNCP), 1109–1145 (TCPS…KNCQ), 1149–1185 (TCQP…AGCV), 1187–1224 (NCTS…AGCP), 1230–1268 (MCHP…TGCV), 1271–1307 (TCSP…KDCP), and 1312–1350 (HCPS…PLCN). 9 disulfide bridges follow: cysteine 1066–cysteine 1079, cysteine 1073–cysteine 1092, cysteine 1086–cysteine 1101, cysteine 1110–cysteine 1122, cysteine 1117–cysteine 1135, cysteine 1129–cysteine 1144, cysteine 1150–cysteine 1162, cysteine 1157–cysteine 1175, and cysteine 1169–cysteine 1184. Ca(2+) is bound by residues tryptophan 1127, aspartate 1130, aspartate 1132, aspartate 1134, aspartate 1140, and glutamate 1141. Asparagine 1187 carries an N-linked (GlcNAc...) asparagine glycan. Cystine bridges form between cysteine 1188–cysteine 1201, cysteine 1195–cysteine 1214, cysteine 1208–cysteine 1223, cysteine 1231–cysteine 1244, cysteine 1238–cysteine 1257, cysteine 1251–cysteine 1267, cysteine 1272–cysteine 1284, cysteine 1279–cysteine 1297, cysteine 1291–cysteine 1306, cysteine 1313–cysteine 1326, cysteine 1320–cysteine 1339, cysteine 1333–cysteine 1349, cysteine 1354–cysteine 1365, cysteine 1361–cysteine 1374, cysteine 1376–cysteine 1389, cysteine 1395–cysteine 1405, cysteine 1401–cysteine 1414, and cysteine 1416–cysteine 1429. Ca(2+) contacts are provided by tyrosine 1206, aspartate 1209, valine 1211, aspartate 1213, aspartate 1219, and glutamate 1220. Residues asparagine 1328 and asparagine 1341 are each glycosylated (N-linked (GlcNAc...) asparagine). The EGF-like 2 domain maps to 1350-1390 (NQDSCSHFNGGCTHQCMQGPFGATCLCPLGYQLANDTKTCE). N-linked (GlcNAc...) asparagine glycosylation is present at asparagine 1384. One can recognise an EGF-like 3; calcium-binding domain in the interval 1391-1430 (DINECDIPGFCSQHCVNMRGSFRCACDPEYTLESDGRTCK). N-linked (GlcNAc...) asparagine glycosylation is found at asparagine 1451, asparagine 1497, and asparagine 1551. 5 LDL-receptor class B repeats span residues 1479-1521 (GRVF…DWIG), 1522-1564 (RNLY…DPRM), 1567-1610 (NVMF…DYPN), 1611-1655 (RLIY…FEDF), and 1656-1696 (VYWT…IHPS). Asparagine 1676, asparagine 1733, and asparagine 1811 each carry an N-linked (GlcNAc...) asparagine glycan. LDL-receptor class B repeat units follow at residues 1791-1833 (QFIY…DWVS), 1834-1883 (RNIY…DPAR), 1884-1931 (GKLY…DIQE), 1932-1973 (QKLY…YGSF), 1974-2014 (LYYS…YHRR), 2108-2157 (GFIY…DWAA), 2158-2202 (GNLY…DPKH), 2203-2246 (RYLF…DHDT), and 2247-2290 (GYIY…FGES). Asparagine 2134, asparagine 2178, and asparagine 2225 each carry an N-linked (GlcNAc...) asparagine glycan. Asparagine 2396 carries an N-linked (GlcNAc...) asparagine glycan. LDL-receptor class B repeat units follow at residues 2432-2478 (NRIF…DWIN), 2479-2519 (RRIY…DPCR), 2520-2563 (GYMY…DLET), 2564-2605 (DLLY…YGQY), and 2606-2647 (IYWT…VVKT). N-linked (GlcNAc...) asparagine glycans are attached at residues asparagine 2488 and asparagine 2548. 10 LDL-receptor class A domains span residues 2700-2738 (RCNQ…TVCA), 2741-2777 (TCRS…AGCL), 2780-2819 (NCNS…KNCP), 2822-2861 (TCPP…IYCA), 2864-2902 (TCRS…DTCG), 2907-2946 (TCRA…HHCE), 2949-2991 (NCSS…QNCT), 2994-3030 (TCSA…RGCS), 3033-3071 (PCHA…HLCH), and 3076-3112 (TCPL…KGCG). 18 disulfide bridges follow: cysteine 2701-cysteine 2713, cysteine 2708-cysteine 2726, cysteine 2720-cysteine 2737, cysteine 2742-cysteine 2754, cysteine 2749-cysteine 2767, cysteine 2761-cysteine 2776, cysteine 2781-cysteine 2794, cysteine 2789-cysteine 2807, cysteine 2801-cysteine 2818, cysteine 2823-cysteine 2836, cysteine 2830-cysteine 2849, cysteine 2843-cysteine 2860, cysteine 2865-cysteine 2878, cysteine 2872-cysteine 2891, cysteine 2885-cysteine 2901, cysteine 2908-cysteine 2920, cysteine 2915-cysteine 2933, and cysteine 2927-cysteine 2945. Asparagine 2782 carries an N-linked (GlcNAc...) asparagine glycan. A glycan (N-linked (GlcNAc...) asparagine) is linked at asparagine 2810. The N-linked (GlcNAc...) asparagine glycan is linked to asparagine 2949. 18 cysteine pairs are disulfide-bonded: cysteine 2950–cysteine 2967, cysteine 2957–cysteine 2980, cysteine 2974–cysteine 2990, cysteine 2995–cysteine 3007, cysteine 3002–cysteine 3020, cysteine 3014–cysteine 3029, cysteine 3034–cysteine 3046, cysteine 3041–cysteine 3059, cysteine 3053–cysteine 3070, cysteine 3077–cysteine 3089, cysteine 3084–cysteine 3102, cysteine 3096–cysteine 3111, cysteine 3116–cysteine 3128, cysteine 3124–cysteine 3137, cysteine 3139–cysteine 3152, cysteine 3158–cysteine 3169, cysteine 3165–cysteine 3178, and cysteine 3180–cysteine 3193. An N-linked (GlcNAc...) asparagine glycan is attached at asparagine 2989. Residues 3112-3153 (GINECLDSSISRCDHNCTDTITSFYCSCLPGYKLMSDKRSCV) form the EGF-like 4 domain. N-linked (GlcNAc...) asparagine glycosylation is present at asparagine 3127. One can recognise an EGF-like 5; calcium-binding domain in the interval 3154 to 3194 (DIDECKESPQLCSQKCENVVGSYICKCAPGYIREPDGKSCR). Asparagine 3213, asparagine 3259, asparagine 3317, and asparagine 3357 each carry an N-linked (GlcNAc...) asparagine glycan. LDL-receptor class B repeat units lie at residues 3241-3283 (KRLY…DWVS), 3284-3326 (RKLY…EHPR), 3335-3378 (GHVY…DYTN), 3379-3421 (DLLY…FEDT), and 3422-3462 (VFWT…YHPY). N-linked (GlcNAc...) asparagine glycosylation occurs at asparagine 3448. LDL-receptor class A domains follow at residues 3513 to 3551 (MCSS…DLCP), 3554 to 3592 (FCRL…VLCE), 3595 to 3633 (RCES…SHCA), 3636 to 3674 (TCRP…DECT), 3679 to 3717 (NCDN…QGCE), 3720 to 3757 (PCHP…ENCV), 3760 to 3796 (ECSE…RDCE), and 3799 to 3835 (TCHP…SACP). Cystine bridges form between cysteine 3514/cysteine 3527, cysteine 3521/cysteine 3540, cysteine 3534/cysteine 3550, cysteine 3555/cysteine 3567, cysteine 3562/cysteine 3580, cysteine 3574/cysteine 3591, cysteine 3596/cysteine 3608, cysteine 3603/cysteine 3621, cysteine 3615/cysteine 3632, cysteine 3637/cysteine 3649, cysteine 3644/cysteine 3662, cysteine 3656/cysteine 3673, cysteine 3680/cysteine 3694, cysteine 3688/cysteine 3707, cysteine 3701/cysteine 3716, cysteine 3721/cysteine 3734, cysteine 3729/cysteine 3747, cysteine 3741/cysteine 3756, cysteine 3761/cysteine 3773, cysteine 3768/cysteine 3786, cysteine 3780/cysteine 3795, cysteine 3800/cysteine 3812, cysteine 3807/cysteine 3825, and cysteine 3819/cysteine 3834. An N-linked (GlcNAc...) asparagine glycan is attached at asparagine 3566. N-linked (GlcNAc...) asparagine glycosylation is present at asparagine 3682. A glycan (N-linked (GlcNAc...) asparagine) is linked at asparagine 3840. LDL-receptor class A domains lie at 3843-3881 (YCPA…HLCF), 3884-3923 (PCES…EHCR), and 3929-3965 (PCTD…TGCN). 9 cysteine pairs are disulfide-bonded: cysteine 3844/cysteine 3856, cysteine 3851/cysteine 3869, cysteine 3863/cysteine 3880, cysteine 3885/cysteine 3898, cysteine 3893/cysteine 3911, cysteine 3905/cysteine 3922, cysteine 3930/cysteine 3942, cysteine 3937/cysteine 3955, and cysteine 3949/cysteine 3964. The 36-residue stretch at 3968 to 4003 (DNRTCAENICEQNCTQLSSGGFICSCRPGFKPSTSD) folds into the EGF-like 6 domain. N-linked (GlcNAc...) asparagine glycosylation is found at asparagine 3969 and asparagine 3980. 5 disulfide bridges follow: cysteine 3972/cysteine 3981, cysteine 3977/cysteine 3991, cysteine 4013/cysteine 4023, cysteine 4019/cysteine 4032, and cysteine 4034/cysteine 4049. The EGF-like 7; calcium-binding domain maps to 4009–4050 (DINECEEFGICPQSCRNSKGSYECFCVDGFKSMSTHYGERCA). Asparagine 4070 is a glycosylation site (N-linked (GlcNAc...) asparagine). LDL-receptor class B repeat units follow at residues 4156–4198 (RHIY…NPKL), 4199–4242 (GLMF…DYLN), and 4244–4285 (DRVY…FEDK). A glycan (N-linked (GlcNAc...) asparagine) is linked at asparagine 4329. An EGF-like 8 domain is found at 4379-4413 (MPPPCRCMHGGNCYFDENELPKCKCSSGYSGEYCE). Disulfide bonds link cysteine 4383/cysteine 4391, cysteine 4385/cysteine 4401, and cysteine 4403/cysteine 4412. Residues 4426–4446 (MAVLLTFVIVIIVGALVLVGL) form a helical membrane-spanning segment. Residues 4447-4660 (FHYRKTGSLL…ANLVKEDSDV (214 aa)) lie on the Cytoplasmic side of the membrane. The SH3-binding signature appears at 4454–4463 (SLLPTLPKLP). The short motif at 4457 to 4462 (PTLPKL) is the PxLPxI/L motif 1; mediates interaction with ANKRA2 element. A PxLPxI/L motif 2; mediates interaction with ANKRA2 motif is present at residues 4460–4465 (PKLPSL). Serine 4464 and serine 4467 each carry phosphoserine. The Endocytosis signal motif lies at 4522-4527 (FENPMY). Positions 4559 to 4582 (NYGRPIDPSEIVPEPKPASPGADE) are disordered. Serine 4577 is subject to Phosphoserine. The interval 4597–4610 (QTTNFENPIYAEMD) is interaction with DAB2. The NPXY motif motif lies at 4603-4606 (NPIY). The SH2-binding motif lies at 4606 to 4609 (YAEM). Residues 4617-4660 (VAVAPPPSPSLPAKASKRNLTPGYTATEDTFKDTANLVKEDSDV) form a disordered region. Positions 4619 to 4630 (VAPPPSPSLPAK) match the SH3-binding motif. Position 4624 is a phosphoserine (serine 4624). Over residues 4634 to 4644 (RNLTPGYTATE) the composition is skewed to polar residues. Threonine 4637 is modified (phosphothreonine). A Phosphoserine modification is found at serine 4658.

It belongs to the LDLR family. Binds plasminogen, extracellular matrix components, plasminogen activator-plasminogen activator inhibitor type I complex, apolipoprotein E-enriched beta-VLDL, lipoprotein lipase, lactoferrin, CLU/clusterin and calcium. Forms a multimeric complex together with LRPAP1. Interacts (via PxLPxI/L motif) with ANKRA2 (via ankyrin repeats). Interacts with LRP2BP. Interacts (via NPXY motif) with DAB2; the interaction is not affected by tyrosine phosphorylation of the NPXY motif. Interacts with MB. Interacts with BMP4. Interacts with the Sonic hedgehog protein N-product which is the active product of SHH. Interacts with CST3 in a calcium-dependent manner. Interacts with the vitamin-D binding protein GC/DBP. Interacts with sex hormone-binding protein SHBG. Interacts with angiotensin-2. Also interacts with angiotensin 1-7. Interacts with APOM. Interacts with selenoprotein SEPP1. Interacts with LEP. Interacts with ALB. Interacts with the antiapoptotic protein BIRC5/survivin. Interacts with matrix metalloproteinase MMP2 in complex with metalloproteinase inhibitor TIMP1. In neurons, forms a trimeric complex with APP and APPB1/FE65. Interacts with LDLRAP1/ARH; mediates trafficking of LRP2 to the endocytic recycling compartment. Does not interact with beta-amyloid protein 40 alone but interacts with the complex composed of beta-amyloid protein 40 and CLU/APOJ. Interacts with MDK. Post-translationally, a fraction undergoes proteolytic cleavage of the extracellular domain at the cell membrane to generate a cytoplasmic tail fragment. This is internalized into the early endosome from where it trafficks in an LDLRAP1/ARH-dependent manner to the endocytic recycling compartment (ERC). In the ERC, it is further cleaved by gamma-secretase to release a fragment which translocates to the nucleus and mediates transcriptional repression. N-glycosylation is required for ligand binding. In the inner ear, expressed in the lumen of the endolymphatic sac where it localizes to macrophage-like cells as well as to mitochondria-rich and ribosome-rich epithelial cells (at protein level). In the inner ear, expressed in marginal cells of the stria vascularis, epithelial cells at the spiral prominence, epithelial cells of Reissner's membrane facing the cochlear duct, and Kolliker's organ (at protein level). Expressed in the choroid plexus epithelium in the brain (at protein level). In the brain, also expressed in astrocytes (at protein level). Expression also detected in epithelial cells of the kidney glomerulus and proximal tubule, lung, epididymis and yolk sac.

It localises to the apical cell membrane. The protein resides in the endosome lumen. The protein localises to the membrane. Its subcellular location is the clathrin-coated pit. It is found in the cell projection. It localises to the dendrite. The protein resides in the axon. Multiligand endocytic receptor. Acts together with CUBN to mediate endocytosis of high-density lipoproteins. Mediates receptor-mediated uptake of polybasic drugs such as aprotinin, aminoglycosides and polymyxin B. In the kidney, mediates the tubular uptake and clearance of leptin. Also mediates transport of leptin across the blood-brain barrier through endocytosis at the choroid plexus epithelium. Endocytosis of leptin in neuronal cells is required for hypothalamic leptin signaling and leptin-mediated regulation of feeding and body weight. Mediates endocytosis and subsequent lysosomal degradation of CST3 in kidney proximal tubule cells. Mediates renal uptake of 25-hydroxyvitamin D3 in complex with the vitamin D3 transporter GC/DBP. Mediates renal uptake of metallothionein-bound heavy metals. Together with CUBN, mediates renal reabsorption of myoglobin. Mediates renal uptake and subsequent lysosomal degradation of APOM. Plays a role in kidney selenium homeostasis by mediating renal endocytosis of selenoprotein SEPP1. Mediates renal uptake of the antiapoptotic protein BIRC5/survivin which may be important for functional integrity of the kidney. Mediates renal uptake of matrix metalloproteinase MMP2 in complex with metalloproteinase inhibitor TIMP1. Mediates endocytosis of Sonic hedgehog protein N-product (ShhN), the active product of SHH. Also mediates ShhN transcytosis. In the embryonic neuroepithelium, mediates endocytic uptake and degradation of BMP4, is required for correct SHH localization in the ventral neural tube and plays a role in patterning of the ventral telencephalon. Required at the onset of neurulation to sequester SHH on the apical surface of neuroepithelial cells of the rostral diencephalon ventral midline and to control PTCH1-dependent uptake and intracellular trafficking of SHH. During neurulation, required in neuroepithelial cells for uptake of folate bound to the folate receptor FOLR1 which is necessary for neural tube closure. In the adult brain, negatively regulates BMP signaling in the subependymal zone which enables neurogenesis to proceed. In astrocytes, mediates endocytosis of ALB which is required for the synthesis of the neurotrophic factor oleic acid. Involved in neurite branching. During optic nerve development, required for SHH-mediated migration and proliferation of oligodendrocyte precursor cells. Mediates endocytic uptake and clearance of SHH in the retinal margin which protects retinal progenitor cells from mitogenic stimuli and keeps them quiescent. Plays a role in reproductive organ development by mediating uptake in reproductive tissues of androgen and estrogen bound to the sex hormone binding protein SHBG. Mediates endocytosis of angiotensin-2. Also mediates endocytosis of angiotensin 1-7. Binds to the complex composed of beta-amyloid protein 40 and CLU/APOJ and mediates its endocytosis and lysosomal degradation. Required for embryonic heart development. Required for normal hearing, possibly through interaction with estrogen in the inner ear. This is Low-density lipoprotein receptor-related protein 2 (Lrp2) from Rattus norvegicus (Rat).